The following is a 249-amino-acid chain: Isoprenyl transferase (249 aa).

Residue Asp-25 is part of the active site. Asp-25 contributes to the Mg(2+) binding site. Residues 26–29 (GNGR), Trp-30, Arg-38, His-42, and 70–72 (STE) contribute to the substrate site. Catalysis depends on Asn-73, which acts as the Proton acceptor. Substrate contacts are provided by residues Trp-74, Arg-76, Arg-197, and 203–205 (RLS). Glu-216 contributes to the Mg(2+) binding site.

The protein belongs to the UPP synthase family. Homodimer. Mg(2+) serves as cofactor.

In terms of biological role, catalyzes the condensation of isopentenyl diphosphate (IPP) with allylic pyrophosphates generating different type of terpenoids. The sequence is that of Isoprenyl transferase from Streptococcus thermophilus (strain CNRZ 1066).